The chain runs to 153 residues: MSDEAKEKRELESQKESSHNKSEKSVEPKPKRRRRRNYDDYDAEVAKEETKAKNGLTKSENNGTVEDSESDMDDAKLDALMGNEGEEEEDDLAEIDTSNIITSGRRTRGKVIDYKKTAEELDKKEPSTGSKDDVGYGEKEEDDEDEEDDDFKE.

Residues 1–29 (MSDEAKEKRELESQKESSHNKSEKSVEPK) are compositionally biased toward basic and acidic residues. The disordered stretch occupies residues 1–153 (MSDEAKEKRE…EDEEDDDFKE (153 aa)). Residue serine 2 is modified to N-acetylserine. Polar residues predominate over residues 56–65 (LTKSENNGTV). Phosphoserine is present on residues serine 68 and serine 70. Residues 84-94 (EGEEEEDDLAE) are compositionally biased toward acidic residues. Positions 87 to 108 (EEEDDLAEIDTSNIITSGRRTR) are important for H2A.Z-H2B binding. The segment covering 110–138 (KVIDYKKTAEELDKKEPSTGSKDDVGYGE) has biased composition (basic and acidic residues). Acidic residues predominate over residues 139 to 153 (KEEDDEDEEDDDFKE).

The protein belongs to the CHZ1 family. In terms of assembly, forms a heterotrimer with H2A.Z-H2B, stabilizing the association of the histone dimer. Also, with a lower affinity, forms a heterotrimer with H2A-H2B.

The protein localises to the nucleus. Forms a chaperone-bound H2A.Z-H2B complex that acts as a source for SWR1 complex-dependent H2A to H2A.Z histone replacement in chromatin. The chain is Histone H2A.Z-specific chaperone CHZ1 (CHZ1) from Saccharomyces cerevisiae (strain ATCC 204508 / S288c) (Baker's yeast).